The sequence spans 159 residues: MRIGHGFDVHAFGGEGPIIIGGVRISYEKGLLAHSDGDVALHALTDALLGAAALGDIGKLFPDTDPAFKGADSRELLREAWRRIQAKGYTLGNVDVTIIAQAPKMLPHIPQMRVFIAEDLGCHMDDVNVKATTTEKLGFTGRGEGIACEAVALLMKAAK.

The a divalent metal cation site is built by Asp-8 and His-10. Residues 8–10 and 34–35 contribute to the 4-CDP-2-C-methyl-D-erythritol 2-phosphate site; these read DVH and HS. His-42 lines the a divalent metal cation pocket. 4-CDP-2-C-methyl-D-erythritol 2-phosphate contacts are provided by residues 56–58, 61–65, 100–106, 132–135, Phe-139, and Arg-142; these read DIG, FPDTD, AQAPKML, and TTTE.

Belongs to the IspF family. In terms of assembly, homotrimer. It depends on a divalent metal cation as a cofactor.

The catalysed reaction is 4-CDP-2-C-methyl-D-erythritol 2-phosphate = 2-C-methyl-D-erythritol 2,4-cyclic diphosphate + CMP. The protein operates within isoprenoid biosynthesis; isopentenyl diphosphate biosynthesis via DXP pathway; isopentenyl diphosphate from 1-deoxy-D-xylulose 5-phosphate: step 4/6. Its function is as follows. Involved in the biosynthesis of isopentenyl diphosphate (IPP) and dimethylallyl diphosphate (DMAPP), two major building blocks of isoprenoid compounds. Catalyzes the conversion of 4-diphosphocytidyl-2-C-methyl-D-erythritol 2-phosphate (CDP-ME2P) to 2-C-methyl-D-erythritol 2,4-cyclodiphosphate (ME-CPP) with a corresponding release of cytidine 5-monophosphate (CMP). The polypeptide is 2-C-methyl-D-erythritol 2,4-cyclodiphosphate synthase (Salmonella dublin (strain CT_02021853)).